Reading from the N-terminus, the 444-residue chain is Tol-Pal system protein TolB (444 aa).

An N-terminal signal peptide occupies residues 1–18 (MRNIIYFILLLFSCTGYA).

Belongs to the TolB family. In terms of assembly, the Tol-Pal system is composed of five core proteins: the inner membrane proteins TolA, TolQ and TolR, the periplasmic protein TolB and the outer membrane protein Pal. They form a network linking the inner and outer membranes and the peptidoglycan layer.

It is found in the periplasm. In terms of biological role, part of the Tol-Pal system, which plays a role in outer membrane invagination during cell division and is important for maintaining outer membrane integrity. In Rickettsia canadensis (strain McKiel), this protein is Tol-Pal system protein TolB.